Here is a 246-residue protein sequence, read N- to C-terminus: 23S rRNA (guanosine-2'-O-)-methyltransferase RlmB (246 aa).

G196, I216, and L225 together coordinate S-adenosyl-L-methionine.

It belongs to the class IV-like SAM-binding methyltransferase superfamily. RNA methyltransferase TrmH family. RlmB subfamily. In terms of assembly, homodimer.

It is found in the cytoplasm. The enzyme catalyses guanosine(2251) in 23S rRNA + S-adenosyl-L-methionine = 2'-O-methylguanosine(2251) in 23S rRNA + S-adenosyl-L-homocysteine + H(+). Functionally, specifically methylates the ribose of guanosine 2251 in 23S rRNA. In Yersinia pestis, this protein is 23S rRNA (guanosine-2'-O-)-methyltransferase RlmB.